We begin with the raw amino-acid sequence, 163 residues long: Bacterial microcompartment assembly protein PduM (163 aa).

It belongs to the PduM family. As to quaternary structure, interacts with shell protein PduK.

The protein localises to the bacterial microcompartment. It participates in polyol metabolism; 1,2-propanediol degradation. Its function is as follows. Plays an essential role in assembly and/or stability of the bacterial microcompartment (BMC) dedicated to 1,2-propanediol (1,2-PD) degradation. Overexpression impairs BMC formation. The 1,2-PD-specific bacterial microcompartment (BMC) concentrates low levels of 1,2-PD catabolic enzymes, concentrates volatile reaction intermediates thus enhancing pathway flux and keeps the level of toxic, mutagenic propionaldehyde low. The polypeptide is Bacterial microcompartment assembly protein PduM (Salmonella typhimurium (strain LT2 / SGSC1412 / ATCC 700720)).